Reading from the N-terminus, the 299-residue chain is Ribosomal RNA small subunit methyltransferase H (299 aa).

Residues 24–26, Asp43, Phe68, Asp90, and Gln97 contribute to the S-adenosyl-L-methionine site; that span reads GGH.

Belongs to the methyltransferase superfamily. RsmH family.

The protein resides in the cytoplasm. It catalyses the reaction cytidine(1402) in 16S rRNA + S-adenosyl-L-methionine = N(4)-methylcytidine(1402) in 16S rRNA + S-adenosyl-L-homocysteine + H(+). In terms of biological role, specifically methylates the N4 position of cytidine in position 1402 (C1402) of 16S rRNA. The protein is Ribosomal RNA small subunit methyltransferase H of Francisella tularensis subsp. tularensis (strain WY96-3418).